The following is a 307-amino-acid chain: 4-hydroxy-3-methylbut-2-enyl diphosphate reductase (307 aa).

Cys13 is a binding site for [4Fe-4S] cluster. 2 residues coordinate (2E)-4-hydroxy-3-methylbut-2-enyl diphosphate: His42 and His75. His42 and His75 together coordinate dimethylallyl diphosphate. Residues His42 and His75 each coordinate isopentenyl diphosphate. Residue Cys97 coordinates [4Fe-4S] cluster. His125 serves as a coordination point for (2E)-4-hydroxy-3-methylbut-2-enyl diphosphate. A dimethylallyl diphosphate-binding site is contributed by His125. Isopentenyl diphosphate is bound at residue His125. Catalysis depends on Glu127, which acts as the Proton donor. Residue Thr165 participates in (2E)-4-hydroxy-3-methylbut-2-enyl diphosphate binding. Residue Cys195 participates in [4Fe-4S] cluster binding. (2E)-4-hydroxy-3-methylbut-2-enyl diphosphate-binding residues include Ser223, Ser224, Asn225, and Ser267. 4 residues coordinate dimethylallyl diphosphate: Ser223, Ser224, Asn225, and Ser267. Positions 223, 224, 225, and 267 each coordinate isopentenyl diphosphate.

Belongs to the IspH family. [4Fe-4S] cluster serves as cofactor.

It carries out the reaction isopentenyl diphosphate + 2 oxidized [2Fe-2S]-[ferredoxin] + H2O = (2E)-4-hydroxy-3-methylbut-2-enyl diphosphate + 2 reduced [2Fe-2S]-[ferredoxin] + 2 H(+). It catalyses the reaction dimethylallyl diphosphate + 2 oxidized [2Fe-2S]-[ferredoxin] + H2O = (2E)-4-hydroxy-3-methylbut-2-enyl diphosphate + 2 reduced [2Fe-2S]-[ferredoxin] + 2 H(+). The protein operates within isoprenoid biosynthesis; dimethylallyl diphosphate biosynthesis; dimethylallyl diphosphate from (2E)-4-hydroxy-3-methylbutenyl diphosphate: step 1/1. It participates in isoprenoid biosynthesis; isopentenyl diphosphate biosynthesis via DXP pathway; isopentenyl diphosphate from 1-deoxy-D-xylulose 5-phosphate: step 6/6. Its function is as follows. Catalyzes the conversion of 1-hydroxy-2-methyl-2-(E)-butenyl 4-diphosphate (HMBPP) into a mixture of isopentenyl diphosphate (IPP) and dimethylallyl diphosphate (DMAPP). Acts in the terminal step of the DOXP/MEP pathway for isoprenoid precursor biosynthesis. The sequence is that of 4-hydroxy-3-methylbut-2-enyl diphosphate reductase from Chlamydia trachomatis serovar A (strain ATCC VR-571B / DSM 19440 / HAR-13).